The following is an 88-amino-acid chain: Small ribosomal subunit protein bS20 (88 aa).

The disordered stretch occupies residues 1 to 28; sequence MANTVQARKRARQAVKQNEHNSSLRSKL.

The protein belongs to the bacterial ribosomal protein bS20 family.

Its function is as follows. Binds directly to 16S ribosomal RNA. This is Small ribosomal subunit protein bS20 from Polynucleobacter necessarius subsp. necessarius (strain STIR1).